The following is a 347-amino-acid chain: Phosphate acyltransferase (347 aa).

This sequence belongs to the PlsX family. As to quaternary structure, homodimer. Probably interacts with PlsY.

It localises to the cytoplasm. The catalysed reaction is a fatty acyl-[ACP] + phosphate = an acyl phosphate + holo-[ACP]. It functions in the pathway lipid metabolism; phospholipid metabolism. Catalyzes the reversible formation of acyl-phosphate (acyl-PO(4)) from acyl-[acyl-carrier-protein] (acyl-ACP). This enzyme utilizes acyl-ACP as fatty acyl donor, but not acyl-CoA. The protein is Phosphate acyltransferase of Sinorhizobium fredii (strain NBRC 101917 / NGR234).